Reading from the N-terminus, the 329-residue chain is uncharacterized protein (329 aa).

The next 9 membrane-spanning stretches (helical) occupy residues 5–24, 34–56, 92–114, 124–146, 159–181, 196–218, 231–253, 263–285, and 306–328; these read NLLL…FLTV, IAVA…YLIF, FGYI…LEWG, IIFF…VLFY, SANF…LLSL, TAHR…LQYL, FSIV…LGAY, LIGV…RLFG, and FWLF…RILT.

It localises to the cell membrane. This is an uncharacterized protein from Archaeoglobus fulgidus (strain ATCC 49558 / DSM 4304 / JCM 9628 / NBRC 100126 / VC-16).